Here is a 275-residue protein sequence, read N- to C-terminus: 4-deoxy-L-threo-5-hexosulose-uronate ketol-isomerase (275 aa).

Positions 193, 195, 200, and 242 each coordinate Zn(2+).

Belongs to the KduI family. The cofactor is Zn(2+).

The catalysed reaction is 5-dehydro-4-deoxy-D-glucuronate = 3-deoxy-D-glycero-2,5-hexodiulosonate. It participates in glycan metabolism; pectin degradation; 2-dehydro-3-deoxy-D-gluconate from pectin: step 4/5. Functionally, catalyzes the isomerization of 5-dehydro-4-deoxy-D-glucuronate to 3-deoxy-D-glycero-2,5-hexodiulosonate. This chain is 4-deoxy-L-threo-5-hexosulose-uronate ketol-isomerase, found in Bacillus licheniformis (strain ATCC 14580 / DSM 13 / JCM 2505 / CCUG 7422 / NBRC 12200 / NCIMB 9375 / NCTC 10341 / NRRL NRS-1264 / Gibson 46).